A 157-amino-acid polypeptide reads, in one-letter code: SsrA-binding protein (157 aa).

The span at 135-151 (DKRETEKKRDWSREKGR) shows a compositional bias: basic and acidic residues. Residues 135 to 157 (DKRETEKKRDWSREKGRLLRARG) are disordered.

Belongs to the SmpB family.

The protein localises to the cytoplasm. Functionally, required for rescue of stalled ribosomes mediated by trans-translation. Binds to transfer-messenger RNA (tmRNA), required for stable association of tmRNA with ribosomes. tmRNA and SmpB together mimic tRNA shape, replacing the anticodon stem-loop with SmpB. tmRNA is encoded by the ssrA gene; the 2 termini fold to resemble tRNA(Ala) and it encodes a 'tag peptide', a short internal open reading frame. During trans-translation Ala-aminoacylated tmRNA acts like a tRNA, entering the A-site of stalled ribosomes, displacing the stalled mRNA. The ribosome then switches to translate the ORF on the tmRNA; the nascent peptide is terminated with the 'tag peptide' encoded by the tmRNA and targeted for degradation. The ribosome is freed to recommence translation, which seems to be the essential function of trans-translation. In Rhodopseudomonas palustris (strain BisB5), this protein is SsrA-binding protein.